Consider the following 279-residue polypeptide: Probable endonuclease 4 (279 aa).

Zn(2+)-binding residues include histidine 69, histidine 109, glutamate 145, aspartate 179, histidine 182, histidine 216, aspartate 229, histidine 231, and glutamate 261.

It belongs to the AP endonuclease 2 family. Requires Zn(2+) as cofactor.

The enzyme catalyses Endonucleolytic cleavage to 5'-phosphooligonucleotide end-products.. Its function is as follows. Endonuclease IV plays a role in DNA repair. It cleaves phosphodiester bonds at apurinic or apyrimidinic (AP) sites, generating a 3'-hydroxyl group and a 5'-terminal sugar phosphate. The sequence is that of Probable endonuclease 4 from Chlorobium luteolum (strain DSM 273 / BCRC 81028 / 2530) (Pelodictyon luteolum).